The chain runs to 182 residues: Caltractin ICL1b (182 aa).

Residues 1-31 (MSRRGQQPPPQQQQAPPQKNQAGKFNPAEFV) are disordered. EF-hand domains are found at residues 38–73 (EEVLEIKEAFDLFDTDGTQSIDPKELKAAMTSLGFE), 74–109 (AKNQTIYQMISDLDTDGSGQIDFAEFLKLMTARISE), 111–146 (DSKADIQKVFNLFDSERAGVITLKDLRKVAKELGET), and 147–182 (MDDSELQEMIDRADSDGDAQVTFEDFYNIMTKKTFA). Residues aspartate 51, aspartate 53, threonine 55, serine 57, glutamate 62, aspartate 87, aspartate 89, serine 91, glutamine 93, and glutamate 98 each coordinate Ca(2+).

It belongs to the centrin family.

The protein resides in the cytoplasm. It localises to the cytoskeleton. Functionally, plays a fundamental role in microtubule organizing center structure and function. Component of the infraciliary lattice (ICL) and the ciliary basal bodies. This is Caltractin ICL1b (Icl1b) from Paramecium tetraurelia.